Reading from the N-terminus, the 143-residue chain is UPF0306 protein plu4501 (143 aa).

Belongs to the UPF0306 family.

The protein is UPF0306 protein plu4501 of Photorhabdus laumondii subsp. laumondii (strain DSM 15139 / CIP 105565 / TT01) (Photorhabdus luminescens subsp. laumondii).